The chain runs to 833 residues: Kinesin-like protein KIFC3 (833 aa).

The interval 19 to 74 is disordered; the sequence is LWRVGRAPEPEPGMARPAPAPASPAARPFPHTGPGRLRTGRGKDTPVCGDEDSSAR. Low complexity predominate over residues 30–48; the sequence is PGMARPAPAPASPAARPFP. Coiled coils occupy residues 102-362 and 395-432; these read LTLQ…ENLA and LLQEALRSVKAEIGQAIEEVNSNNQELLRKYRRELQLR. Residues 445 to 768 enclose the Kinesin motor domain; sequence NIRVIARVRP…LKFAERVRSV (324 aa). ATP is bound at residue 528 to 535; that stretch reads GQTGAGKT. The interval 786-833 is disordered; the sequence is EHLEWEPACQTPQPSARAHSAPSSGTSSRPGSIRRKLQPSGKSRPLPV. Positions 806–815 are enriched in polar residues; it reads APSSGTSSRP. Residues Ser813 and Ser817 each carry the phosphoserine modification.

This sequence belongs to the TRAFAC class myosin-kinesin ATPase superfamily. Kinesin family.

Its subcellular location is the cell junction. It is found in the adherens junction. It localises to the cytoplasm. The protein localises to the cytoskeleton. The protein resides in the microtubule organizing center. Its subcellular location is the centrosome. It is found in the cytoplasmic vesicle membrane. Its function is as follows. Minus-end microtubule-dependent motor protein. Involved in apically targeted transport. Required for zonula adherens maintenance. The sequence is that of Kinesin-like protein KIFC3 (KIFC3) from Homo sapiens (Human).